We begin with the raw amino-acid sequence, 706 residues long: Methionine--tRNA ligase (706 aa).

A 'HIGH' region motif is present at residues 13–23 (PYANGSIHLGH). Zn(2+)-binding residues include C144, C147, C157, and C160. The short motif at 336–340 (KMSKS) is the 'KMSKS' region element. K339 is a binding site for ATP. Residues 570–593 (QQTMNTETESHSPQRHGQAQQHPV) form a disordered region. The tRNA-binding domain maps to 604–706 (DFVKIDLRIA…SGAQPGMRVK (103 aa)).

The protein belongs to the class-I aminoacyl-tRNA synthetase family. MetG type 1 subfamily. Homodimer. Requires Zn(2+) as cofactor.

Its subcellular location is the cytoplasm. It catalyses the reaction tRNA(Met) + L-methionine + ATP = L-methionyl-tRNA(Met) + AMP + diphosphate. In terms of biological role, is required not only for elongation of protein synthesis but also for the initiation of all mRNA translation through initiator tRNA(fMet) aminoacylation. The polypeptide is Methionine--tRNA ligase (Nitrosomonas europaea (strain ATCC 19718 / CIP 103999 / KCTC 2705 / NBRC 14298)).